The sequence spans 146 residues: Deoxyuridine 5'-triphosphate nucleotidohydrolase (146 aa).

Substrate contacts are provided by residues 60–62 (RSG), Asn-73, and 77–79 (VID).

It belongs to the dUTPase family. Mg(2+) is required as a cofactor.

It catalyses the reaction dUTP + H2O = dUMP + diphosphate + H(+). The protein operates within pyrimidine metabolism; dUMP biosynthesis; dUMP from dCTP (dUTP route): step 2/2. Functionally, this enzyme is involved in nucleotide metabolism: it produces dUMP, the immediate precursor of thymidine nucleotides and it decreases the intracellular concentration of dUTP so that uracil cannot be incorporated into DNA. The protein is Deoxyuridine 5'-triphosphate nucleotidohydrolase of Tropheryma whipplei (strain TW08/27) (Whipple's bacillus).